We begin with the raw amino-acid sequence, 763 residues long: Translation initiation factor IF-2 (763 aa).

The interval 52–178 is disordered; that stretch reads KQKKVQTSQN…KDEAIKHETK (127 aa). Residues 65-82 are compositionally biased toward basic and acidic residues; sequence SNDENKKITNKNTEKTTE. The span at 86–96 shows a compositional bias: polar residues; that stretch reads TVDSNKQNNSN. Composition is skewed to basic and acidic residues over residues 105-116 and 123-135; these read RNNDEESVSHFD and KSEMNEKRDLNDK. The segment covering 136–145 has biased composition (basic residues); that stretch reads KKNKNFKNTK. Positions 146–161 are enriched in low complexity; sequence NKNSNNNKNSKNNKNN. Residues 162 to 178 are compositionally biased toward basic and acidic residues; sequence KNNDHNRKDEAIKHETK. In terms of domain architecture, tr-type G spans 265–434; that stretch reads ERPPVITVMG…LMVAEMEELK (170 aa). Residues 274–281 are G1; the sequence is GHVDHGKT. GTP is bound at residue 274 to 281; that stretch reads GHVDHGKT. A G2 region spans residues 299–303; the sequence is GITQH. A G3 region spans residues 320–323; that stretch reads DTPG. GTP-binding positions include 320 to 324 and 374 to 377; these read DTPGH and NKID. The tract at residues 374 to 377 is G4; sequence NKID. The segment at 410 to 412 is G5; the sequence is SAR.

It belongs to the TRAFAC class translation factor GTPase superfamily. Classic translation factor GTPase family. IF-2 subfamily.

It is found in the cytoplasm. Its function is as follows. One of the essential components for the initiation of protein synthesis. Protects formylmethionyl-tRNA from spontaneous hydrolysis and promotes its binding to the 30S ribosomal subunits. Also involved in the hydrolysis of GTP during the formation of the 70S ribosomal complex. This Finegoldia magna (strain ATCC 29328 / DSM 20472 / WAL 2508) (Peptostreptococcus magnus) protein is Translation initiation factor IF-2.